The primary structure comprises 130 residues: Astrocytic phosphoprotein PEA-15 (130 aa).

Positions 3–81 constitute a DED domain; that stretch reads EYGTLLQDLT…RPDLLTMVVD (79 aa). A phosphoserine mark is found at serine 61 and serine 90. A microtubule-binding region spans residues 98 to 107; the sequence is KLTRIPSAKK. A Phosphoserine; by PKC modification is found at serine 104. Serine 116 is modified (phosphoserine; by CaMK2). Residues 122 to 129 are microtubule-binding; the sequence is KLAPPPKK.

Binds RPS6KA3, MAPK3 and MAPK1. Interacts with CASP8 and FADD. Transient interaction with PLD1 and PLD2. In terms of processing, phosphorylated by protein kinase C and calcium-calmodulin-dependent protein kinase. These phosphorylation events are modulated by neurotransmitters or hormones. Predominantly expressed in the brain. Low levels in some peripheral organs.

It localises to the cytoplasm. Blocks Ras-mediated inhibition of integrin activation and modulates the ERK MAP kinase cascade. Inhibits RPS6KA3 activities by retaining it in the cytoplasm. Inhibits both TNFRSF6- and TNFRSF1A-mediated CASP8 activity and apoptosis. Regulates glucose transport by controlling both the content of SLC2A1 glucose transporters on the plasma membrane and the insulin-dependent trafficking of SLC2A4 from the cell interior to the surface. This chain is Astrocytic phosphoprotein PEA-15 (Pea15), found in Mus musculus (Mouse).